Here is a 654-residue protein sequence, read N- to C-terminus: Interferon-induced GTP-binding protein Mx1 (654 aa).

At Met1 the chain carries N-acetylmethionine. 2 stretches are compositionally biased toward basic and acidic residues: residues 1–12 (MVLSDLDIKEPD) and 23–32 (DMVREHETES). The interval 1-33 (MVLSDLDIKEPDSPESGLNGSDDMVREHETESK) is disordered. A Dynamin-type G domain is found at 62–335 (DLALPAIAVI…LIMHICKTLP (274 aa)). The tract at residues 72 to 79 (GDQSSGKS) is G1 motif. Position 72–79 (72–79 (GDQSSGKS)) interacts with GTP. The interval 97–99 (VTR) is G2 motif. The G3 motif stretch occupies residues 173–176 (DLPG). GTP is bound by residues 173–177 (DLPGI) and 242–245 (TKPD). Residues 242–245 (TKPD) are G4 motif. The G5 motif stretch occupies residues 274 to 277 (KCRG). The tract at residues 336–361 (LLENQIKETHQRITEELQKYGKDIPE) is bundle signaling element (BSE). The tract at residues 361–528 (EEESEKMFSL…HFQMEQLVYC (168 aa)) is middle domain. A stalk region spans residues 362 to 624 (EESEKMFSLI…KDQYDWLLKE (263 aa)). Residues 544–563 (EAEEEKKKKSNHYYQSEDSE) form a disordered region. Positions 549–552 (KKKK) are critical for lipid-binding. One can recognise a GED domain in the interval 566–654 (TAEIFQHLMA…ARQRLAKFPG (89 aa)).

The protein belongs to the TRAFAC class dynamin-like GTPase superfamily. Dynamin/Fzo/YdjA family. In terms of assembly, homooligomer. Oligomerizes into multimeric filamentous or ring-like structures by virtue of its stalk domain. Oligomerization is critical for GTPase activity, protein stability, and recognition of viral target structures. Interacts with TRPC1, TRPC3, TRPC4, TRPC5, TRPC6 and TRPC7. Interacts with HSPA5. Interacts with DDX39A and DDX39B. Interacts with TUBB/TUBB5. ISGylated.

It localises to the cytoplasm. Its subcellular location is the endoplasmic reticulum membrane. The protein localises to the perinuclear region. Functionally, interferon-induced dynamin-like GTPase with antiviral activity. This chain is Interferon-induced GTP-binding protein Mx1 (MX1), found in Ovis aries (Sheep).